A 241-amino-acid chain; its full sequence is B9 domain-containing protein 1 (241 aa).

Residues 1–42 (MSASEGISLPGNEETTPPHEKHKQKAKKAKKKSRSAKESVPN) are disordered. The span at 20 to 34 (EKHKQKAKKAKKKSR) shows a compositional bias: basic residues. A C2 B9-type domain is found at 53 to 197 (FSLSIVGQIV…TSWLLRREPE (145 aa)).

It belongs to the B9D family. In terms of assembly, probable component of the tectonic-like complex (also named MKS complex), composed of B9d1, B9d2, Cc2d2a, Mks1 and tctn. In terms of tissue distribution, expressed in type I sensory neurons (at protein level). Expressed in spermatids and spermatocytes (at protein level).

It localises to the cytoplasm. Its subcellular location is the cytoskeleton. It is found in the cilium basal body. Its function is as follows. Probable component of the tectonic-like complex (also named MKS complex), a complex localized at the transition zone of primary cilia. Required for ciliary structure and function. This is B9 domain-containing protein 1 from Drosophila melanogaster (Fruit fly).